Reading from the N-terminus, the 235-residue chain is N-alpha-acetyltransferase 10 (235 aa).

M1 is subject to N-acetylmethionine. The segment at 1–58 (MNIRNARPEDLMNMQHCNLLCLPENYQMKYYFYHGLSWPQLSYIAEDENGKIVGYVLA) is interaction with NAA15. Residues 1 to 152 (MNIRNARPED…DAYAMKRDLT (152 aa)) form the N-acetyltransferase domain. The residue at position 136 (K136) is an N6-acetyllysine; by autocatalysis. Positions 178–235 (NKVESKGNSPPSSGEACREEKGLAAEDSGGDSKDLSEVSETTESTDVKDSSEASDSAS) are disordered. Phosphoserine occurs at positions 182, 186, and 205. Residues 193–213 (ACREEKGLAAEDSGGDSKDLS) show a composition bias toward basic and acidic residues. S209 bears the Phosphoserine; by IKKB mark. Residues S213 and S216 each carry the phosphoserine modification.

The protein belongs to the acetyltransferase family. ARD1 subfamily. Component of the N-terminal acetyltransferase A complex (also called the NatA complex) composed of NAA10 and NAA15. Within the complex interacts with NAA15. Component of the N-terminal acetyltransferase A (NatA)/HYPK complex at least composed of NAA10, NAA15 and HYPK, which has N-terminal acetyltransferase activity. In complex with NAA15, interacts with HYPK. Component of the N-terminal acetyltransferase E (NatE) complex at least composed of NAA10, NAA15 and NAA50. Within the complex interacts with NAA15; the interaction is required for binding to NAAT50. Interacts with NAAT50. The interaction of the NatA complex with NAA50 reduces the acetylation activity of the NatA complex. Component of the N-terminal acetyltransferase E (NatE)/HYPK complex at least composed of NAA10, NAA15, NAA50 and HYPK. In complex with NAA15, interacts with HYPK; the interaction with HYPK reduces the capacity of the NatA complex to interact with NAA50. Interacts with HIF1A (via its ODD domain); the interaction increases HIF1A protein stability during normoxia, an down-regulates it when induced by hypoxia. Interacts with the ribosome. Binds to MYLK. Interacts with NAA16. Interacts (via its C-terminal domain) with TSC2, leading to its acetylation. Interacts with IKBKB. Interacts with HSPA1A and HSPA1B leading to its acetylation. In terms of processing, cleaved by caspases during apoptosis. Post-translationally, phosphorylation by IKBKB/IKKB at Ser-209 promotes its proteasome-mediated degradation. Autoacetylated at Lys-136 which stimulates its catalytic activity. Ubiquitous.

Its subcellular location is the cytoplasm. It localises to the nucleus. The enzyme catalyses N-terminal glycyl-[protein] + acetyl-CoA = N-terminal N(alpha)-acetylglycyl-[protein] + CoA + H(+). The catalysed reaction is N-terminal L-alanyl-[protein] + acetyl-CoA = N-terminal N(alpha)-acetyl-L-alanyl-[protein] + CoA + H(+). It catalyses the reaction N-terminal L-seryl-[protein] + acetyl-CoA = N-terminal N(alpha)-acetyl-L-seryl-[protein] + CoA + H(+). It carries out the reaction N-terminal L-valyl-[protein] + acetyl-CoA = N-terminal N(alpha)-acetyl-L-valyl-[protein] + CoA + H(+). The enzyme catalyses N-terminal L-cysteinyl-[protein] + acetyl-CoA = N-terminal N(alpha)-acetyl-L-cysteinyl-[protein] + CoA + H(+). The catalysed reaction is N-terminal L-threonyl-[protein] + acetyl-CoA = N-terminal N(alpha)-acetyl-L-threonyl-[protein] + CoA + H(+). Functionally, catalytic subunit of N-terminal acetyltransferase complexes which display alpha (N-terminal) acetyltransferase activity. Acetylates amino termini that are devoid of initiator methionine. The alpha (N-terminal) acetyltransferase activity may be important for vascular, hematopoietic and neuronal growth and development. Without NAA15, displays epsilon (internal) acetyltransferase activity towards HIF1A, thereby promoting its degradation. Represses MYLK kinase activity by acetylation, and thus represses tumor cell migration. Acetylates, and stabilizes TSC2, thereby repressing mTOR activity and suppressing cancer development. Acetylates HSPA1A and HSPA1B at 'Lys-77' which enhances its chaperone activity and leads to preferential binding to co-chaperone HOPX. Acetylates HIST1H4A. Acts as a negative regulator of sister chromatid cohesion during mitosis. The chain is N-alpha-acetyltransferase 10 (NAA10) from Homo sapiens (Human).